A 173-amino-acid chain; its full sequence is Galactose-6-phosphate isomerase subunit LacB (173 aa).

Belongs to the LacAB/RpiB family. As to quaternary structure, heteromultimeric protein consisting of LacA and LacB.

It catalyses the reaction aldehydo-D-galactose 6-phosphate = keto-D-tagatose 6-phosphate. It functions in the pathway carbohydrate metabolism; D-galactose 6-phosphate degradation; D-tagatose 6-phosphate from D-galactose 6-phosphate: step 1/1. The polypeptide is Galactose-6-phosphate isomerase subunit LacB (Clostridium acetobutylicum (strain ATCC 824 / DSM 792 / JCM 1419 / IAM 19013 / LMG 5710 / NBRC 13948 / NRRL B-527 / VKM B-1787 / 2291 / W)).